Reading from the N-terminus, the 506-residue chain is MTSKPHSDWIPYSVLDDEGRNLRQQKLDRQRALLEQKQKKKRQEPLMVQANADGRPRSRRARQSEEQAPLVESYLSSSGSTSYQVQEADSLASVQLGATRPTAPASAKRTKAAATAGGQGGAARKEKKGKHKGTSGPAALAEDKSEAQGPVQILTVGQSDHAQDAGETAAGGGERPSGQDLRATMQRKGISSSMSFDEDEEDEEENSSSSSQLNSNTRPSSATSRKSVREAASAPSPTAPEQPVDVEVQDLEEFALRPAPQGITIKCRITRDKKGMDRGMYPTYFLHLDREDGKKVFLLAGRKRKKSKTSNYLISVDPTDLSRGGDSYIGKLRSNLMGTKFTVYDNGVNPQKASSSTLESGTLRQELAAVCYETNVLGFKGPRKMSVIVPGMNMVHERVSIRPRNEHETLLARWQNKNTESIIELQNKTPVWNDDTQSYVLNFHGRVTQASVKNFQIIHGNDPDYIVMQFGRVAEDVFTMDYNYPLCALQAFAIALSSFDSKLACE.

Positions 36–244 are disordered; it reads QKQKKKRQEP…PSPTAPEQPV (209 aa). Low complexity-rich tracts occupy residues 70 to 87 and 101 to 116; these read LVES…QVQE and PTAP…AATA. Acidic residues predominate over residues 196-206; it reads FDEDEEDEEEN. Composition is skewed to low complexity over residues 207 to 221 and 230 to 243; these read SSSS…RPSS and EAAS…PEQP.

It belongs to the TUB family. As to quaternary structure, interacts with GNAQ. Interacts with TULP1.

The protein resides in the cytoplasm. Its subcellular location is the nucleus. It localises to the secreted. It is found in the cell membrane. In terms of biological role, functions in signal transduction from heterotrimeric G protein-coupled receptors. Binds to membranes containing phosphatidylinositol 4,5-bisphosphate. Can bind DNA (in vitro). May contribute to the regulation of transcription in the nucleus. Could be involved in the hypothalamic regulation of body weight. Contribute to stimulation of phagocytosis of apoptotic retinal pigment epithelium (RPE) cells and macrophages. In Homo sapiens (Human), this protein is Tubby protein homolog (TUB).